The chain runs to 478 residues: DNA-directed RNA polymerase subunit alpha (478 aa).

The segment at Met-1–Glu-341 is alpha N-terminal domain (alpha-NTD). Positions Arg-365–Leu-478 are alpha C-terminal domain (alpha-CTD).

Belongs to the RNA polymerase alpha chain family. As to quaternary structure, in plastids the minimal PEP RNA polymerase catalytic core is composed of four subunits: alpha, beta, beta', and beta''. When a (nuclear-encoded) sigma factor is associated with the core the holoenzyme is formed, which can initiate transcription.

The protein localises to the plastid. Its subcellular location is the chloroplast. It carries out the reaction RNA(n) + a ribonucleoside 5'-triphosphate = RNA(n+1) + diphosphate. DNA-dependent RNA polymerase catalyzes the transcription of DNA into RNA using the four ribonucleoside triphosphates as substrates. The chain is DNA-directed RNA polymerase subunit alpha (rpoA) from Tetradesmus obliquus (Green alga).